Reading from the N-terminus, the 281-residue chain is 4-diphosphocytidyl-2-C-methyl-D-erythritol kinase (281 aa).

The active site involves K15. 98–108 (PTGAGLGGGSS) provides a ligand contact to ATP. D140 is an active-site residue.

This sequence belongs to the GHMP kinase family. IspE subfamily.

It carries out the reaction 4-CDP-2-C-methyl-D-erythritol + ATP = 4-CDP-2-C-methyl-D-erythritol 2-phosphate + ADP + H(+). Its pathway is isoprenoid biosynthesis; isopentenyl diphosphate biosynthesis via DXP pathway; isopentenyl diphosphate from 1-deoxy-D-xylulose 5-phosphate: step 3/6. In terms of biological role, catalyzes the phosphorylation of the position 2 hydroxy group of 4-diphosphocytidyl-2C-methyl-D-erythritol. This chain is 4-diphosphocytidyl-2-C-methyl-D-erythritol kinase, found in Neisseria gonorrhoeae (strain ATCC 700825 / FA 1090).